The chain runs to 783 residues: Protein transport protein SEC23 B (783 aa).

4 residues coordinate Zn(2+): C59, C62, C81, and C84. The segment at 59 to 84 (CRICTAALNPFARVDFLAKIWICPIC) is zinc finger-like.

The protein belongs to the SEC23/SEC24 family. SEC23 subfamily. In terms of assembly, component of the coat protein complex II (COPII), composed of at least five proteins: the Sec23/24 complex, the Sec13/31 complex and Sar1. Interacts with SEC24A.

The protein localises to the cytoplasmic vesicle. The protein resides in the COPII-coated vesicle membrane. It is found in the endoplasmic reticulum membrane. It localises to the membrane. Functionally, component of the coat protein complex II (COPII) which promotes the formation of transport vesicles from the endoplasmic reticulum (ER). The coat has two main functions, the physical deformation of the endoplasmic reticulum membrane into vesicles and the selection of cargo molecules. This chain is Protein transport protein SEC23 B, found in Arabidopsis thaliana (Mouse-ear cress).